The primary structure comprises 327 residues: Methionyl-tRNA formyltransferase (327 aa).

121–124 (SLLP) is a (6S)-5,6,7,8-tetrahydrofolate binding site.

It belongs to the Fmt family.

It catalyses the reaction L-methionyl-tRNA(fMet) + (6R)-10-formyltetrahydrofolate = N-formyl-L-methionyl-tRNA(fMet) + (6S)-5,6,7,8-tetrahydrofolate + H(+). Its function is as follows. Attaches a formyl group to the free amino group of methionyl-tRNA(fMet). The formyl group appears to play a dual role in the initiator identity of N-formylmethionyl-tRNA by promoting its recognition by IF2 and preventing the misappropriation of this tRNA by the elongation apparatus. This Burkholderia vietnamiensis (strain G4 / LMG 22486) (Burkholderia cepacia (strain R1808)) protein is Methionyl-tRNA formyltransferase.